Reading from the N-terminus, the 266-residue chain is Protein-ADP-ribose hydrolase (266 aa).

Residues 74 to 265 form the Macro domain; that stretch reads TDLKDLKPIK…LYKEALNRDA (192 aa). ADP-D-ribose is bound by residues aspartate 93, isoleucine 94, and asparagine 107. The Zn(2+) site is built by cysteine 113, histidine 118, and cysteine 120. Residues cysteine 120, isoleucine 121, aspartate 122, serine 212, threonine 213, glycine 214, and phenylalanine 216 each contribute to the ADP-D-ribose site.

This sequence belongs to the MacroD-type family. Zn-Macro subfamily. Monomer. Directly interacts with the lipoylated form of GcvH-L. The cofactor is Zn(2+).

The enzyme catalyses 4-O-(ADP-D-ribosyl)-L-aspartyl-[protein] + H2O = L-aspartyl-[protein] + ADP-D-ribose + H(+). ADP-ribosylhydrolase that specifically reverses the SirTM-mediated mono-ADP-ribosylation at an asparatate residue of GcvH-L (SAV0324), by releasing ADP-ribose from the target protein. May play a role in the regulation of the response to host-induced oxidative stress. This chain is Protein-ADP-ribose hydrolase, found in Staphylococcus aureus (strain Mu50 / ATCC 700699).